A 412-amino-acid chain; its full sequence is MSGKGSVVLAYSGGLDTSCILVWLKEQGYDVIAYLANIGQKEDFEEARKKALKLGAKKVFIEDISKEFVEEFIWPAIQSSALYEDRYLLGTSLARPCIARKQVEIAQREGAKYVSHGATGKGNDQIRFELTCYSLAPQIKVIAPWRMPEFYNRFQGRNDLMEYAKQHGIPVPVTPKNPWSMDENLMHISYEAGILENPKNQAPPGLYTKTQDPAKAPNSPDMLEIEFKKGVPVKVTNVGDGTTHSTALELFLYLNEVAGKHGVGRIDIVENRFIGMKSRGIYETPAGTILYHAHLDIEAFTMDREVRKIKQGLGLKFAELVYTGFWHSPECEFVRHCIAKSQERVEGKVQVSVFKGQVYILGRESPLSLYNEELVSMNVQGDYEPVDATGFININSLRLKEYHRLQNKVTAK.

ATP is bound by residues 10–18 (AYSGGLDTS) and Ala36. Residues Tyr87 and Ser92 each contribute to the L-citrulline site. Tyr87 bears the Phosphotyrosine mark. Position 112 is an N6-acetyllysine (Lys112). Tyr113 bears the Phosphotyrosine mark. Residue 115-123 (SHGATGKGN) participates in ATP binding. L-aspartate contacts are provided by Thr119, Asn123, and Asp124. Asn123 lines the L-citrulline pocket. Arg127 is an L-citrulline binding site. Residues Lys165 and Lys176 each carry the N6-acetyllysine; by CLOCK modification. Residues Ser180 and Ser189 each contribute to the L-citrulline site. Ser180 carries the post-translational modification Phosphoserine. Residue Ser219 is modified to Phosphoserine. Positions 270 and 282 each coordinate L-citrulline.

This sequence belongs to the argininosuccinate synthase family. Type 1 subfamily. In terms of assembly, homotetramer. Interacts with NMRAL1. Interacts with CLOCK; in a circadian manner. Forms tissue-specific complexes with ASL, SLC7A1, HSP90AA1 and nitric oxide synthase NOS1, NOS2 or NOS3; the complex regulates cell-autonomous L-arginine synthesis and citrulline recycling while channeling extracellular L-arginine to nitric oxide synthesis pathway. Acetylated by CLOCK in a circadian manner which negatively regulates its enzyme activity. Deacetylated by histone deacetylases.

The protein localises to the cytoplasm. The protein resides in the cytosol. The enzyme catalyses L-citrulline + L-aspartate + ATP = 2-(N(omega)-L-arginino)succinate + AMP + diphosphate + H(+). Its pathway is amino-acid biosynthesis; L-arginine biosynthesis; L-arginine from L-ornithine and carbamoyl phosphate: step 2/3. The protein operates within nitrogen metabolism; urea cycle; (N(omega)-L-arginino)succinate from L-aspartate and L-citrulline: step 1/1. Its function is as follows. One of the enzymes of the urea cycle, the metabolic pathway transforming neurotoxic amonia produced by protein catabolism into inocuous urea in the liver of ureotelic animals. Catalyzes the formation of arginosuccinate from aspartate, citrulline and ATP and together with ASL it is responsible for the biosynthesis of arginine in most body tissues. The polypeptide is Argininosuccinate synthase (Bos taurus (Bovine)).